Here is a 95-residue protein sequence, read N- to C-terminus: Glutamyl-tRNA(Gln) amidotransferase subunit C 1 (95 aa).

Belongs to the GatC family. As to quaternary structure, heterotrimer of A, B and C subunits.

It catalyses the reaction L-glutamyl-tRNA(Gln) + L-glutamine + ATP + H2O = L-glutaminyl-tRNA(Gln) + L-glutamate + ADP + phosphate + H(+). It carries out the reaction L-aspartyl-tRNA(Asn) + L-glutamine + ATP + H2O = L-asparaginyl-tRNA(Asn) + L-glutamate + ADP + phosphate + 2 H(+). Functionally, allows the formation of correctly charged Asn-tRNA(Asn) or Gln-tRNA(Gln) through the transamidation of misacylated Asp-tRNA(Asn) or Glu-tRNA(Gln) in organisms which lack either or both of asparaginyl-tRNA or glutaminyl-tRNA synthetases. The reaction takes place in the presence of glutamine and ATP through an activated phospho-Asp-tRNA(Asn) or phospho-Glu-tRNA(Gln). In Clostridium acetobutylicum (strain ATCC 824 / DSM 792 / JCM 1419 / IAM 19013 / LMG 5710 / NBRC 13948 / NRRL B-527 / VKM B-1787 / 2291 / W), this protein is Glutamyl-tRNA(Gln) amidotransferase subunit C 1 (gatC1).